A 400-amino-acid polypeptide reads, in one-letter code: Phosphoglycerate kinase (400 aa).

Residues 22–24, Arg38, 61–64, Arg120, and Arg153 each bind substrate; these read DFN and HLGR. Residues Lys206, Gly297, Glu328, and 354–357 each bind ATP; that span reads GGDT.

This sequence belongs to the phosphoglycerate kinase family. In terms of assembly, monomer.

The protein resides in the cytoplasm. It carries out the reaction (2R)-3-phosphoglycerate + ATP = (2R)-3-phospho-glyceroyl phosphate + ADP. It functions in the pathway carbohydrate degradation; glycolysis; pyruvate from D-glyceraldehyde 3-phosphate: step 2/5. The chain is Phosphoglycerate kinase from Campylobacter curvus (strain 525.92).